The following is a 102-amino-acid chain: Nucleoid-associated protein WIGBR5260 (102 aa).

The protein belongs to the YbaB/EbfC family. In terms of assembly, homodimer.

Its subcellular location is the cytoplasm. The protein resides in the nucleoid. In terms of biological role, binds to DNA and alters its conformation. May be involved in regulation of gene expression, nucleoid organization and DNA protection. The chain is Nucleoid-associated protein WIGBR5260 from Wigglesworthia glossinidia brevipalpis.